We begin with the raw amino-acid sequence, 375 residues long: Ferredoxin--NADP reductase, root-type isozyme, chloroplastic (375 aa).

A chloroplast-targeting transit peptide spans 1-60 (MAHSALSQVSVAVPLQTDSSFRRSTFKATSITFSDRSSWISMPPIDLKAAPSRNQHIVCM). In terms of domain architecture, FAD-binding FR-type spans 91–219 (KEPYTATIVS…TGPSGKIMLL (129 aa)). Residues 151–154 (RLYL), 172–174 (CVR), tyrosine 178, 193–195 (VCS), and threonine 235 contribute to the FAD site. NADP(+) is bound at residue arginine 174. Residues threonine 235, 266–267 (VA), 296–297 (SR), lysine 306, 334–335 (GL), and glutamate 373 each bind NADP(+).

The protein belongs to the ferredoxin--NADP reductase type 1 family. Requires FAD as cofactor.

It localises to the plastid. The protein localises to the chloroplast. The enzyme catalyses 2 reduced [2Fe-2S]-[ferredoxin] + NADP(+) + H(+) = 2 oxidized [2Fe-2S]-[ferredoxin] + NADPH. Its pathway is energy metabolism; photosynthesis. In terms of biological role, may play a key role in regulating the relative amounts of cyclic and non-cyclic electron flow to meet the demands of the plant for ATP and reducing power. Is involved in nitrate assimilation. The polypeptide is Ferredoxin--NADP reductase, root-type isozyme, chloroplastic (Nicotiana tabacum (Common tobacco)).